A 392-amino-acid polypeptide reads, in one-letter code: Phosphopentomutase (392 aa).

Residues Asp-10, Asp-282, His-287, Asp-323, His-324, and His-335 each contribute to the Mn(2+) site.

Belongs to the phosphopentomutase family. Mn(2+) is required as a cofactor.

The protein localises to the cytoplasm. The enzyme catalyses 2-deoxy-alpha-D-ribose 1-phosphate = 2-deoxy-D-ribose 5-phosphate. The catalysed reaction is alpha-D-ribose 1-phosphate = D-ribose 5-phosphate. The protein operates within carbohydrate degradation; 2-deoxy-D-ribose 1-phosphate degradation; D-glyceraldehyde 3-phosphate and acetaldehyde from 2-deoxy-alpha-D-ribose 1-phosphate: step 1/2. Functionally, isomerase that catalyzes the conversion of deoxy-ribose 1-phosphate (dRib-1-P) and ribose 1-phosphate (Rib-1-P) to deoxy-ribose 5-phosphate (dRib-5-P) and ribose 5-phosphate (Rib-5-P), respectively. This Dictyoglomus thermophilum (strain ATCC 35947 / DSM 3960 / H-6-12) protein is Phosphopentomutase.